The following is a 276-amino-acid chain: MLHRSLACFAVPADRKAFMELVKTLRYRTEAPISDCSAALKETDGDMDAAMQVLRKRGAARAMKKGDRVTEHGFVVSCVGSTPQSGAAIVTICSETDFAARNEHFQRVCMQVRDQLCKLMDATNGAVLANPEEAVKHLSDVMAEELRVAIAVLGENMRVRSIAPLVPAPHVSERLLIGSYTHGSLNVDNVGRIVGLVALSQVRENEVVPKDVLTSVGRHFVATSGAEGNYAHQNFFGSETETVGKWLKQRGLKFSSSLVQEFGKEPVVHTAPEPHR.

Belongs to the EF-Ts family.

The protein localises to the mitochondrion. In terms of biological role, associates with the EF-Tu.GDP complex and induces the exchange of GDP to GTP. It remains bound to the aminoacyl-tRNA.EF-Tu.GTP complex up to the GTP hydrolysis stage on the ribosome. This Leishmania major protein is Elongation factor Ts, mitochondrial.